A 511-amino-acid polypeptide reads, in one-letter code: MEEIQRYLQLERSQQHDFLYPLIFQEYIYAFAHDRDFNRSILSENPGYDNKSSLLIVKRLITRMYQQNHFLISPNDSNQNTFLASKNDLRIQIISEGFAFIVEIPFSLRLISCLEGKKKKIVKSQNLRSIHSIFPFLEDHFSHLNFVLDILIPHPVHVEILVQTLRYWVKDASSLHLLRFFLNEYCNWNSLITPKKASSSFSKRNQRLFLFLYNSHVYEYESIFGFLRNQSSHLRSTSSGVLRERIHFYGKIERLVNVFVKVKDFQANLWLVKEPCMHYIRYQRKSILASKGTSLFMNKWKCYLVTFWQWHFSLWFHPRRIYINQLSNHSLEFLGYLSSVRMNPSVVRSQILENSFLINNAIKRVDTLVPIIPLIASLAKAKFCNVLGHPISKPVRADLSDSNIIDRFGRICRNLSHYHSGSSKKKSLYRIKYILRLSCARTLARKHKSTVRTFLKRLGSELLEEFLMSEEDVLFLTFPKVSSTLQGVYRSRIWYLDIISINDLANHKSKF.

It belongs to the intron maturase 2 family. MatK subfamily.

It localises to the plastid. It is found in the chloroplast. Usually encoded in the trnK tRNA gene intron. Probably assists in splicing its own and other chloroplast group II introns. The protein is Maturase K of Diplacus aurantiacus (Orange bush monkey flower).